Consider the following 347-residue polypeptide: MAAIGGDGRMPMGVAIEVKGLTKSFGSSRIWEDVTLDIPAGEVSVLLGPSGTGKSVFLKSLIGLLRPERGSILIDGTDIIECSAKELYEIRTLFGVLFQDGALFGSMNLYDNTAFPLREHTKKKESEIRDIVMEKLQLVGLGGDEKKFPGEISGGMRKRAGLARALVLDPQIILCDEPDSGLDPVRTAYLSQLIMDINAQIDATILIVTHNVNIARTVPDNMGMLFRKHLVMFGPREVLLTSDEPVVRQFLNGRRIGPIGMSEEKDESTMAEEAALLEAGHYAGGAEEVEGVPPQITVTPGMPKRKAVARRQARVRAMLPTLPKGAQAAILDDLEGAHNYQAHEFGD.

The region spanning 16–252 is the ABC transporter domain; it reads IEVKGLTKSF…DEPVVRQFLN (237 aa). 48–55 contacts ATP; it reads GPSGTGKS.

It belongs to the ABC transporter superfamily.

Its function is as follows. Not known, could be involved in the transport of ribonucleotides. In Mycobacterium leprae (strain TN), this protein is Probable ribonucleotide transport ATP-binding protein mkl (mkl).